The primary structure comprises 340 residues: DNA-directed RNA polymerase subunit alpha (340 aa).

Residues 1–226 (MLIAQRPSLT…ELFGLARELN (226 aa)) form an alpha N-terminal domain (alpha-NTD) region. An alpha C-terminal domain (alpha-CTD) region spans residues 243 to 340 (LAADLALPIE…DAGFVETEQY (98 aa)).

Belongs to the RNA polymerase alpha chain family. In terms of assembly, homodimer. The RNAP catalytic core consists of 2 alpha, 1 beta, 1 beta' and 1 omega subunit. When a sigma factor is associated with the core the holoenzyme is formed, which can initiate transcription.

The catalysed reaction is RNA(n) + a ribonucleoside 5'-triphosphate = RNA(n+1) + diphosphate. Its function is as follows. DNA-dependent RNA polymerase catalyzes the transcription of DNA into RNA using the four ribonucleoside triphosphates as substrates. The polypeptide is DNA-directed RNA polymerase subunit alpha (Streptomyces avermitilis (strain ATCC 31267 / DSM 46492 / JCM 5070 / NBRC 14893 / NCIMB 12804 / NRRL 8165 / MA-4680)).